Consider the following 238-residue polypeptide: RxLR effector protein PITG_14788 (238 aa).

A signal peptide spans 1–23 (MKSLHAVNLVLLLLLACFAPAPA). Residues 47–65 (RLLRAHSSGKEEQKEEEER) carry the RxLR-dEER motif.

The protein belongs to the RxLR effector family.

It localises to the secreted. It is found in the host cytoplasm. Its subcellular location is the host cytoskeleton. The protein resides in the host nucleus. The protein localises to the host nucleolus. In terms of biological role, effector that enhances P.infestans colonization of Nicotiana benthamiana leaves. The sequence is that of RxLR effector protein PITG_14788 from Phytophthora infestans (strain T30-4) (Potato late blight agent).